A 443-amino-acid chain; its full sequence is Tubulin beta chain (443 aa).

The GTP site is built by Gln11, Glu69, Ser138, Gly142, Thr143, Gly144, Asn204, and Asn226. Glu69 contacts Mg(2+). The disordered stretch occupies residues Gln424–Asn443. The segment covering Thr429–Asn443 has biased composition (acidic residues).

The protein belongs to the tubulin family. Dimer of alpha and beta chains. A typical microtubule is a hollow water-filled tube with an outer diameter of 25 nm and an inner diameter of 15 nM. Alpha-beta heterodimers associate head-to-tail to form protofilaments running lengthwise along the microtubule wall with the beta-tubulin subunit facing the microtubule plus end conferring a structural polarity. Microtubules usually have 13 protofilaments but different protofilament numbers can be found in some organisms and specialized cells. The cofactor is Mg(2+). Post-translationally, some glutamate residues at the C-terminus are either polyglutamylated or polyglycylated. These 2 modifications occur exclusively on glutamate residues and result in either polyglutamate or polyglycine chains on the gamma-carboxyl group. Both modifications can coexist on the same protein on adjacent residues, and lowering polyglycylation levels increases polyglutamylation, and reciprocally. The precise function of such modifications is still unclear but they regulate the assembly and dynamics of axonemal microtubules.

It localises to the cytoplasm. It is found in the cytoskeleton. Its function is as follows. Tubulin is the major constituent of microtubules, a cylinder consisting of laterally associated linear protofilaments composed of alpha- and beta-tubulin heterodimers. Microtubules grow by the addition of GTP-tubulin dimers to the microtubule end, where a stabilizing cap forms. Below the cap, tubulin dimers are in GDP-bound state, owing to GTPase activity of alpha-tubulin. This Tetrahymena thermophila protein is Tubulin beta chain (BTU1).